A 77-amino-acid chain; its full sequence is Large ribosomal subunit protein eL13 (77 aa).

Belongs to the eukaryotic ribosomal protein eL13 family.

The polypeptide is Large ribosomal subunit protein eL13 (Sulfurisphaera tokodaii (strain DSM 16993 / JCM 10545 / NBRC 100140 / 7) (Sulfolobus tokodaii)).